The primary structure comprises 264 residues: Thymidylate synthase (264 aa).

Position 21 (R21) interacts with dUMP. A (6R)-5,10-methylene-5,6,7,8-tetrahydrofolate-binding site is contributed by H51. DUMP is bound at residue 126 to 127 (RR). The Nucleophile role is filled by C146. Residues 166–169 (RSCD), N177, and 207–209 (HLY) contribute to the dUMP site. Residue D169 coordinates (6R)-5,10-methylene-5,6,7,8-tetrahydrofolate. A263 is a binding site for (6R)-5,10-methylene-5,6,7,8-tetrahydrofolate.

The protein belongs to the thymidylate synthase family. Bacterial-type ThyA subfamily. As to quaternary structure, homodimer.

The protein localises to the cytoplasm. The catalysed reaction is dUMP + (6R)-5,10-methylene-5,6,7,8-tetrahydrofolate = 7,8-dihydrofolate + dTMP. Its pathway is pyrimidine metabolism; dTTP biosynthesis. Catalyzes the reductive methylation of 2'-deoxyuridine-5'-monophosphate (dUMP) to 2'-deoxythymidine-5'-monophosphate (dTMP) while utilizing 5,10-methylenetetrahydrofolate (mTHF) as the methyl donor and reductant in the reaction, yielding dihydrofolate (DHF) as a by-product. This enzymatic reaction provides an intracellular de novo source of dTMP, an essential precursor for DNA biosynthesis. In Aeromonas hydrophila subsp. hydrophila (strain ATCC 7966 / DSM 30187 / BCRC 13018 / CCUG 14551 / JCM 1027 / KCTC 2358 / NCIMB 9240 / NCTC 8049), this protein is Thymidylate synthase.